We begin with the raw amino-acid sequence, 168 residues long: Photosystem I assembly protein Ycf3 (168 aa).

TPR repeat units lie at residues 35 to 68 (AFTY…EIDP), 72 to 105 (SYIL…NPFL), and 120 to 153 (GEQA…TPGN).

Belongs to the Ycf3 family.

The protein resides in the plastid. It localises to the chloroplast thylakoid membrane. In terms of biological role, essential for the assembly of the photosystem I (PSI) complex. May act as a chaperone-like factor to guide the assembly of the PSI subunits. The polypeptide is Photosystem I assembly protein Ycf3 (Chloranthus spicatus (Chulantree)).